Here is a 991-residue protein sequence, read N- to C-terminus: Transcription factor ROB1 (991 aa).

The zn(2)-C6 fungal-type DNA-binding region spans 17–43 (CTVCRTIKRKCDGNTPCSNCLKRNQEC). Disordered regions lie at residues 150–188 (LNQQ…ISLA), 792–875 (FYAQ…EDNP), and 901–959 (QEEG…PQLP). A compositionally biased stretch (low complexity) spans 152 to 168 (QQQQQQQPSPQSLSQSS). The span at 169–187 (ASEVSTRSSPASPNSTISL) shows a compositional bias: polar residues. Over residues 795 to 806 (QQQQQQQQQQQQ) the composition is skewed to low complexity. 2 stretches are compositionally biased toward basic and acidic residues: residues 807 to 817 (PKHEYHDHQQE) and 825 to 855 (QEEH…YPMK). Positions 907–931 (QQQQQQQQEQVQQEQVQQEQVQQDQ) are enriched in low complexity.

The protein resides in the nucleus. Functionally, transcription factor that mediates conventional biofilm formation and plays a key role in microcolony formation under both flow and static conditions and to epithelial surfaces. Modulates infection of mammalian hosts. In Candida albicans (strain SC5314 / ATCC MYA-2876) (Yeast), this protein is Transcription factor ROB1.